We begin with the raw amino-acid sequence, 9439 residues long: Extracellular matrix-binding protein ebh (9439 aa).

30 FIVAR domains span residues 1815–1871 (ARRR…VNSA), 1901–1957 (AKEQ…INDA), 1985–2041 (AYDT…VRDA), 2071–2127 (AKKR…ITSE), 2155–2211 (AYNK…VTQA), 2241–2297 (AKNR…ISSE), 2325–2381 (AYNK…VEDA), 2411–2467 (AKEK…ITEN), 2488–2551 (DTTS…VNNA), 2581–2638 (ARNR…STEI), 2665–2720 (AKNQ…IRTN), 2748–2804 (AKTA…VSDE), 2832–2888 (AYNQ…VNNA), 2918–2974 (AKEQ…ISNA), 3002–3058 (AYNQ…VTAA), 3088–3144 (AKQQ…ITNE), 3172–3228 (AYNQ…VAQA), 3258–3314 (AKNQ…ISDE), 3335–3398 (DTTE…VNNA), 3428–3484 (ARLN…ITTE), 3512–3567 (AKTA…IKTN), 3595–3650 (IKRQ…VKES), 3678–3733 (AKNR…IRQN), 3802–3860 (SMTA…IDQK), 3928–3983 (AMTQ…LDPA), 4056–4114 (AMQA…VNQK), 4182–4240 (SMGT…VDNA), 4308–4365 (AMHT…INQK), 4433–4491 (VMEQ…IEQA), and 4559–4617 (SMQT…IDQT). Residues 2495–2507 (EVRKLSRRGDTNN) show a composition bias toward basic and acidic residues. The segment at 2495–2514 (EVRKLSRRGDTNNKKPSSVS) is disordered. The segment covering 2925 to 2938 (AVDQVPSTEGMTQQ) has biased composition (polar residues). The segment at 2925–2951 (AVDQVPSTEGMTQQTKDDYNSKQQAAQ) is disordered. Residues 4649–4674 (GYLNDPQKSGEESLVNGSNTRSEVEE) are disordered. FIVAR domains follow at residues 4685–4743 (AMKQ…IEQK), 4811–4869 (AMQA…IEQA), 4937–4995 (AMSN…IEQA), 5063–5115 (AMEA…VLDK), 5189–5246 (AMLG…INQL), 5314–5372 (LMGA…VTTA), 5440–5498 (AMGE…IDQA), 5566–5624 (AMKK…ITNA), 5692–5750 (AMKQ…IADT), 5818–5875 (DMST…LQDL), 5943–6000 (AMKA…IKQA), 6068–6126 (KMEE…INRT), 6194–6252 (AMQQ…IQAI), and 6320–6378 (EMGT…IADA). The span at 5699–5712 (QVNQDDQISNSSPF) shows a compositional bias: polar residues. Residues 5699–5719 (QVNQDDQISNSSPFINEDSDK) are disordered. The disordered stretch occupies residues 6413–6434 (NNSQRQSEHDEINSAPSRTEVS). FIVAR domains lie at 6446–6504 (AMRQ…IEDA), 6572–6630 (AMKA…INRA), 6698–6755 (SMNQ…IDQA), 6823–6877 (TMKA…ANDE), 6949–7007 (AMKK…INTI), 7075–7133 (SMNT…VERA), 7201–7259 (DMKK…IENA), 7327–7384 (AMKH…IKQL), 7452–7510 (AMEN…IEHA), 7578–7636 (AMKA…INSI), 7704–7762 (AMET…VDIV), 7830–7888 (AMKS…VRQA), 7956–8010 (VMGK…TKQA), 8078–8137 (IMGE…IDTF), 8205–8264 (AMKS…IQGL), 8332–8391 (AMKD…VLGL), 8459–8518 (KMKL…IQHL), and 8587–8643 (AMQG…ANII). Residues 9306–9324 (TVGVITLTGLLSSFWLVLA) traverse the membrane as a helical segment. Composition is skewed to basic and acidic residues over residues 9363 to 9375 (DKEE…DKHS), 9386 to 9395 (EKQLSEEDIH), and 9404 to 9413 (QNSDNKDTKQ). A disordered region spans residues 9363-9439 (DKEEQIQNDD…VVKTKKRSKK (77 aa)). The segment covering 9414 to 9439 (KKVTSKKKKTPQSTKKVVKTKKRSKK) has biased composition (basic residues).

The protein resides in the cell membrane. In Staphylococcus epidermidis (strain ATCC 12228 / FDA PCI 1200), this protein is Extracellular matrix-binding protein ebh (ebh).